We begin with the raw amino-acid sequence, 200 residues long: dITP/XTP pyrophosphatase (200 aa).

7–12 is a binding site for substrate; the sequence is TSNKHK. The Mg(2+) site is built by Glu-38 and Asp-73. Catalysis depends on Asp-73, which acts as the Proton acceptor. Residues Ser-74, 154 to 157, Lys-177, and 182 to 183 each bind substrate; these read FGYD and HR.

It belongs to the HAM1 NTPase family. Homodimer. The cofactor is Mg(2+).

The catalysed reaction is XTP + H2O = XMP + diphosphate + H(+). It catalyses the reaction dITP + H2O = dIMP + diphosphate + H(+). The enzyme catalyses ITP + H2O = IMP + diphosphate + H(+). In terms of biological role, pyrophosphatase that catalyzes the hydrolysis of nucleoside triphosphates to their monophosphate derivatives, with a high preference for the non-canonical purine nucleotides XTP (xanthosine triphosphate), dITP (deoxyinosine triphosphate) and ITP. Seems to function as a house-cleaning enzyme that removes non-canonical purine nucleotides from the nucleotide pool, thus preventing their incorporation into DNA/RNA and avoiding chromosomal lesions. The sequence is that of dITP/XTP pyrophosphatase from Campylobacter jejuni subsp. jejuni serotype O:6 (strain 81116 / NCTC 11828).